Reading from the N-terminus, the 189-residue chain is Protein GrpE (189 aa).

Positions 1–37 are disordered; it reads MSDSSKEKKKKFADMVSRQKGDDQQSDNHKQTDDLNE. The span at 17–33 shows a compositional bias: basic and acidic residues; it reads SRQKGDDQQSDNHKQTD.

Belongs to the GrpE family. As to quaternary structure, homodimer.

It localises to the cytoplasm. Its function is as follows. Participates actively in the response to hyperosmotic and heat shock by preventing the aggregation of stress-denatured proteins, in association with DnaK and GrpE. It is the nucleotide exchange factor for DnaK and may function as a thermosensor. Unfolded proteins bind initially to DnaJ; upon interaction with the DnaJ-bound protein, DnaK hydrolyzes its bound ATP, resulting in the formation of a stable complex. GrpE releases ADP from DnaK; ATP binding to DnaK triggers the release of the substrate protein, thus completing the reaction cycle. Several rounds of ATP-dependent interactions between DnaJ, DnaK and GrpE are required for fully efficient folding. This Wolbachia pipientis wMel protein is Protein GrpE.